The sequence spans 568 residues: Autophagy-related protein 18 (568 aa).

The WD 1 repeat unit spans residues 19–57 (KPSSSVNFITFNQDGSCIAVGNNKGYSIFTTNPFTKCYD). Polar residues predominate over residues 162–171 (STDTSNSADN). Residues 162–210 (STDTSNSADNSGSIGSGPASGSGAGSGSASMTSTDSTPDAQSHSYLAYP) are disordered. Residues 175 to 187 (IGSGPASGSGAGS) show a composition bias toward gly residues. The span at 188 to 198 (GSASMTSTDST) shows a compositional bias: low complexity. WD repeat units follow at residues 268 to 308 (AHKS…KLYQ) and 313 to 352 (TYPT…SLES). The short motif at 309 to 313 (FRRGT) is the L/FRRG motif element. Residues 350-429 (LESKHKRKRA…ISGMSEDGKE (80 aa)) are disordered. Over residues 375 to 394 (DLDDEIEDDGDDSDVDDVES) the composition is skewed to acidic residues. A compositionally biased stretch (polar residues) spans 405-421 (LSQGSSNSYTSMNSGIS). WD repeat units follow at residues 464–508 (DFLP…DMVP) and 518–558 (APAS…GGDC).

Belongs to the WD repeat PROPPIN family. In terms of assembly, component of the PI(3,5)P2 regulatory complex.

The protein localises to the preautophagosomal structure membrane. Its subcellular location is the vacuole membrane. It is found in the endosome membrane. Functionally, the PI(3,5)P2 regulatory complex regulates both the synthesis and turnover of phosphatidylinositol 3,5-bisphosphate (PtdIns(3,5)P2). Necessary for proper vacuole morphology. Plays an important role in osmotically-induced vacuole fragmentation. Required for cytoplasm to vacuole transport (Cvt) vesicle formation, pexophagy and starvation-induced autophagy. Involved in correct ATG9 trafficking to the pre-autophagosomal structure. Might also be involved in premeiotic DNA replication. This Meyerozyma guilliermondii (strain ATCC 6260 / CBS 566 / DSM 6381 / JCM 1539 / NBRC 10279 / NRRL Y-324) (Yeast) protein is Autophagy-related protein 18 (ATG18).